We begin with the raw amino-acid sequence, 154 residues long: 6,7-dimethyl-8-ribityllumazine synthase (154 aa).

5-amino-6-(D-ribitylamino)uracil-binding positions include phenylalanine 22, 57 to 59 (AYE), and 81 to 83 (AVI). 86–87 (GT) is a (2S)-2-hydroxy-3-oxobutyl phosphate binding site. Histidine 89 acts as the Proton donor in catalysis. Position 114 (phenylalanine 114) interacts with 5-amino-6-(D-ribitylamino)uracil. Position 128 (arginine 128) interacts with (2S)-2-hydroxy-3-oxobutyl phosphate.

This sequence belongs to the DMRL synthase family. As to quaternary structure, forms an icosahedral capsid composed of 60 subunits, arranged as a dodecamer of pentamers.

It catalyses the reaction (2S)-2-hydroxy-3-oxobutyl phosphate + 5-amino-6-(D-ribitylamino)uracil = 6,7-dimethyl-8-(1-D-ribityl)lumazine + phosphate + 2 H2O + H(+). It participates in cofactor biosynthesis; riboflavin biosynthesis; riboflavin from 2-hydroxy-3-oxobutyl phosphate and 5-amino-6-(D-ribitylamino)uracil: step 1/2. Catalyzes the formation of 6,7-dimethyl-8-ribityllumazine by condensation of 5-amino-6-(D-ribitylamino)uracil with 3,4-dihydroxy-2-butanone 4-phosphate. This is the penultimate step in the biosynthesis of riboflavin. The sequence is that of 6,7-dimethyl-8-ribityllumazine synthase from Colwellia psychrerythraea (strain 34H / ATCC BAA-681) (Vibrio psychroerythus).